Reading from the N-terminus, the 355-residue chain is F-box only protein 32 (355 aa).

Residues Lys-62 to Asp-67 carry the Nuclear localization signal motif. The Nuclear export signal motif lies at Leu-169–Leu-173. The F-box domain occupies Leu-223–Gln-271. A Bipartite nuclear localization signal motif is present at residues Arg-280–Lys-295.

In terms of assembly, part of the SCF (SKP1-CUL1-F-box) E3 ubiquitin-protein ligase complex SCF(FBXO32) formed of CUL1, SKP1, RBX1 and FBXO32.

It is found in the cytoplasm. The protein resides in the nucleus. Its pathway is protein modification; protein ubiquitination. In terms of biological role, substrate recognition component of a SCF (SKP1-CUL1-F-box protein) E3 ubiquitin-protein ligase complex which mediates the ubiquitination and subsequent proteasomal degradation of target proteins. Probably recognizes and binds to phosphorylated target proteins during skeletal muscle atrophy. Recognizes TERF1. This chain is F-box only protein 32 (FBXO32), found in Bos taurus (Bovine).